The following is a 359-amino-acid chain: DNA polymerase IV (359 aa).

In terms of domain architecture, UmuC spans 4–185 (IIHIDMDCYF…LPLSKIPGVG (182 aa)). Mg(2+)-binding residues include aspartate 8 and aspartate 103. Glutamate 104 is a catalytic residue.

This sequence belongs to the DNA polymerase type-Y family. As to quaternary structure, monomer. Mg(2+) serves as cofactor.

It localises to the cytoplasm. The catalysed reaction is DNA(n) + a 2'-deoxyribonucleoside 5'-triphosphate = DNA(n+1) + diphosphate. Functionally, poorly processive, error-prone DNA polymerase involved in untargeted mutagenesis. Copies undamaged DNA at stalled replication forks, which arise in vivo from mismatched or misaligned primer ends. These misaligned primers can be extended by PolIV. Exhibits no 3'-5' exonuclease (proofreading) activity. May be involved in translesional synthesis, in conjunction with the beta clamp from PolIII. This is DNA polymerase IV from Shewanella frigidimarina (strain NCIMB 400).